The sequence spans 397 residues: MRESAHTNTSLWSKGMMAVTSAQFLSAFGDNALLFATLALLKAEFYPDWSQPILQMVFVGAYILFAPFVGQVADSFPKGRVMMFANSLKLLGAASICFGFNPFIGYTLVGIGAAAYSPAKYGILGELTTGDKLVKANGLMESSTIAAILLGSVAGGVLADWHVLAALGICAVVYAGAVVANLFIPTLPVARPGQSWRFTPMTSSFFNACRVLWRDGETRFSLIGTSMFWGAGVTLRFLLVLWVPTALGITDNATPTYLNAMVAVGIVVGAGAAAKLVTLETVRRCMPAGILIGVGVLFFSLQHALLPAYGLLILIGILGGFFIVPLNALLQERGKHTVGAGNAIAVQNLGENTAMLLMLGLYSLAVKAGLPVVGIGVGFGALFALAITGLWIWQRRR.

11 helical membrane passes run 21–41 (SAQF…LALL), 53–73 (ILQM…GQVA), 91–111 (LGAA…LVGI), 139–159 (LMES…GVLA), 164–184 (LAAL…NLFI), 229–249 (WGAG…ALGI), 257–277 (YLNA…AKLV), 281–301 (TVRR…FFSL), 304–324 (ALLP…FFIV), 344–364 (IAVQ…LYSL), and 372–392 (VVGI…GLWI).

It belongs to the major facilitator superfamily. LplT (TC 2.A.1.42) family.

Its subcellular location is the cell inner membrane. Catalyzes the facilitated diffusion of 2-acyl-glycero-3-phosphoethanolamine (2-acyl-GPE) into the cell. This Enterobacter sp. (strain 638) protein is Lysophospholipid transporter LplT.